Reading from the N-terminus, the 231-residue chain is Ureidoacrylate amidohydrolase RutB (231 aa).

Residue D25 is the Proton acceptor of the active site. K134 is an active-site residue. C167 acts as the Nucleophile in catalysis.

The protein belongs to the isochorismatase family. RutB subfamily.

The catalysed reaction is (Z)-3-ureidoacrylate + H2O + H(+) = (Z)-3-aminoacrylate + NH4(+) + CO2. It catalyses the reaction (Z)-3-ureidoacrylate + H2O = (Z)-3-aminoacrylate + carbamate + H(+). It carries out the reaction (Z)-2-methylureidoacrylate + H2O + H(+) = (Z)-2-methylaminoacrylate + NH4(+) + CO2. Its function is as follows. Hydrolyzes ureidoacrylate to form aminoacrylate and carbamate. The carbamate hydrolyzes spontaneously, thereby releasing one of the nitrogen atoms of the pyrimidine ring as ammonia and one of its carbon atoms as CO2. This chain is Ureidoacrylate amidohydrolase RutB, found in Escherichia coli O18:K1:H7 (strain IHE3034 / ExPEC).